The primary structure comprises 451 residues: Tubulin alpha-2 chain (451 aa).

Position 11 (glutamine 11) interacts with GTP. Position 40 is an N6-acetyllysine (lysine 40). 6 residues coordinate GTP: glutamate 71, glycine 144, threonine 145, threonine 179, asparagine 206, and asparagine 228. Glutamate 71 contacts Mg(2+). Residue glutamate 254 is part of the active site.

Belongs to the tubulin family. As to quaternary structure, dimer of alpha and beta chains. A typical microtubule is a hollow water-filled tube with an outer diameter of 25 nm and an inner diameter of 15 nM. Alpha-beta heterodimers associate head-to-tail to form protofilaments running lengthwise along the microtubule wall with the beta-tubulin subunit facing the microtubule plus end conferring a structural polarity. Microtubules usually have 13 protofilaments but different protofilament numbers can be found in some organisms and specialized cells. Requires Mg(2+) as cofactor. In terms of processing, undergoes a tyrosination/detyrosination cycle, the cyclic removal and re-addition of a C-terminal tyrosine residue by the enzymes tubulin tyrosine carboxypeptidase (TTCP) and tubulin tyrosine ligase (TTL), respectively. Acetylation of alpha chains at Lys-40 stabilizes microtubules and affects affinity and processivity of microtubule motors. This modification has a role in multiple cellular functions, ranging from cell motility, cell cycle progression or cell differentiation to intracellular trafficking and signaling.

The protein resides in the cytoplasm. It localises to the cytoskeleton. The catalysed reaction is GTP + H2O = GDP + phosphate + H(+). In terms of biological role, tubulin is the major constituent of microtubules, a cylinder consisting of laterally associated linear protofilaments composed of alpha- and beta-tubulin heterodimers. Microtubules grow by the addition of GTP-tubulin dimers to the microtubule end, where a stabilizing cap forms. Below the cap, tubulin dimers are in GDP-bound state, owing to GTPase activity of alpha-tubulin. In Zea mays (Maize), this protein is Tubulin alpha-2 chain (TUBA2).